Consider the following 424-residue polypeptide: Dapdiamide A synthase (424 aa).

The ATP-grasp domain maps to 120-318 (QEQLALKGVA…QISKLAQAVL (199 aa)). 147–209 (AGHAHWPVVL…QEFLAGEEFV (63 aa)) is a binding site for ATP. Mg(2+) contacts are provided by E275 and E287.

Mg(2+) serves as cofactor. It depends on Mn(2+) as a cofactor.

The catalysed reaction is 3-[[[(2R,3R)-3-carboxyoxiran-2-yl]carbonyl]amino]-L-alanine + L-valine + ATP = dapdiamide E + ADP + phosphate + H(+). It catalyses the reaction N(3)-fumaramoyl-(S)-2,3-diaminopropanoate + L-valine + ATP = dapdiamide A + ADP + phosphate + H(+). It carries out the reaction N(3)-fumaramoyl-(S)-2,3-diaminopropanoate + L-isoleucine + ATP = dapdiamide B + ADP + phosphate + H(+). The enzyme catalyses N(3)-fumaramoyl-(S)-2,3-diaminopropanoate + L-leucine + ATP = dapdiamide C + ADP + phosphate + H(+). Its pathway is antibiotic biosynthesis. Involved in dapdiamide antibiotics biosynthesis. Ligates N-beta-fumaramoyl-DAP and valine, isoleucine or leucine to form dapdiamides A, B or C, respectively. Also ligates N-beta-epoxysuccinamoyl-DAP and valine to form dapdiamide E. The chain is Dapdiamide A synthase from Enterobacter agglomerans (Erwinia herbicola).